Consider the following 184-residue polypeptide: MTRSSIELGDVTPHNIKQLKKLNTVVFPVSYNDKFYVDVLEAGELAKLAYYNDIVVGAVCCRIDNTENQRRLYIMTLGCLSPYRRLGIGTVMFEHIMNFAEKDGNFDSIFLHVQINNNGAIEFYKKFGFEIVDTKEQYYKRIEPADAHVLQKTLRRTAPNSNSTATSTTANSNSRSKARQFTFV.

The 150-residue stretch at isoleucine 6–arginine 155 folds into the N-acetyltransferase domain. Position 31 (tyrosine 31) interacts with substrate. Lysine 47 is modified (N6-acetyllysine; by autocatalysis). The active site involves tyrosine 73. Methionine 75 is a substrate binding site. An acetyl-CoA-binding site is contributed by leucine 77–threonine 90. Histidine 112 is an active-site residue. Asparagine 117–lysine 126 contacts CoA. The segment at tyrosine 138–arginine 141 is substrate. A compositionally biased stretch (low complexity) spans threonine 157–serine 174. Positions threonine 157–serine 176 are disordered.

The protein belongs to the acetyltransferase family. In terms of assembly, component of an acetyltransferase complex, at least composed of san, Ard1 and Nat1. In terms of processing, autoacetylated.

It is found in the cytoplasm. The catalysed reaction is N-terminal L-methionyl-L-alanyl-[protein] + acetyl-CoA = N-terminal N(alpha)-acetyl-L-methionyl-L-alanyl-[protein] + CoA + H(+). The enzyme catalyses N-terminal L-methionyl-L-seryl-[protein] + acetyl-CoA = N-terminal N(alpha)-acetyl-L-methionyl-L-seryl-[protein] + CoA + H(+). It carries out the reaction N-terminal L-methionyl-L-valyl-[protein] + acetyl-CoA = N-terminal N(alpha)-acetyl-L-methionyl-L-valyl-[protein] + CoA + H(+). It catalyses the reaction N-terminal L-methionyl-L-threonyl-[protein] + acetyl-CoA = N-terminal N(alpha)-acetyl-L-methionyl-L-threonyl-[protein] + CoA + H(+). The catalysed reaction is N-terminal L-methionyl-L-lysyl-[protein] + acetyl-CoA = N-terminal N(alpha)-acetyl-L-methionyl-L-lysyl-[protein] + CoA + H(+). The enzyme catalyses N-terminal L-methionyl-L-leucyl-[protein] + acetyl-CoA = N-terminal N(alpha)-acetyl-L-methionyl-L-leucyl-[protein] + CoA + H(+). It carries out the reaction N-terminal L-methionyl-L-phenylalanyl-[protein] + acetyl-CoA = N-terminal N(alpha)-acetyl-L-methionyl-L-phenylalanyl-[protein] + CoA + H(+). It catalyses the reaction N-terminal L-methionyl-L-tyrosyl-[protein] + acetyl-CoA = N-terminal N(alpha)-acetyl-L-methionyl-L-tyrosyl-[protein] + CoA + H(+). N-alpha-acetyltransferase that acetylates the N-terminus of proteins that retain their initiating methionine. Has a broad substrate specificity: able to acetylate the initiator methionine of most peptides. Also displays N-epsilon-acetyltransferase activity by mediating acetylation of the side chain of specific lysines on proteins. Autoacetylates. Required for the establishment of sister chromatid cohesion and couple the processes of cohesion and DNA replication to ensure that only sister chromatids become paired together. Required for the interaction between Scc1/vtd and SMC3, possibly by mediating N-terminal acetylation of Scc1/vtd. Its function is as follows. (Microbial infection) Required for optimal replication of E.chaffeensis in the immune tissues, hemocytes, and fat body. The polypeptide is Probable N-acetyltransferase san (san) (Drosophila melanogaster (Fruit fly)).